Reading from the N-terminus, the 84-residue chain is Cytochrome b559 subunit alpha (84 aa).

The helical transmembrane segment at 22 to 36 (IIHSITIPALFVAGW) threads the bilayer. H24 provides a ligand contact to heme.

The protein belongs to the PsbE/PsbF family. In terms of assembly, heterodimer of an alpha subunit and a beta subunit. PSII is composed of 1 copy each of membrane proteins PsbA, PsbB, PsbC, PsbD, PsbE, PsbF, PsbH, PsbI, PsbJ, PsbK, PsbL, PsbM, PsbT, PsbX, PsbY, PsbZ, Psb30/Ycf12, at least 3 peripheral proteins of the oxygen-evolving complex and a large number of cofactors. It forms dimeric complexes. The cofactor is heme b.

Its subcellular location is the plastid. The protein localises to the chloroplast thylakoid membrane. Functionally, this b-type cytochrome is tightly associated with the reaction center of photosystem II (PSII). PSII is a light-driven water:plastoquinone oxidoreductase that uses light energy to abstract electrons from H(2)O, generating O(2) and a proton gradient subsequently used for ATP formation. It consists of a core antenna complex that captures photons, and an electron transfer chain that converts photonic excitation into a charge separation. This chain is Cytochrome b559 subunit alpha, found in Guillardia theta (Cryptophyte).